A 263-amino-acid polypeptide reads, in one-letter code: Endonuclease 8 (263 aa).

The Schiff-base intermediate with DNA role is filled by proline 2. Glutamate 3 (proton donor) is an active-site residue. Lysine 53 acts as the Proton donor; for beta-elimination activity in catalysis. DNA is bound by residues glutamine 70, arginine 125, and asparagine 169. An FPG-type zinc finger spans residues 229 to 263 (KVFHRDGEPCERCGSIIEKTTLSSRPFYWCPGCQH). Arginine 253 acts as the Proton donor; for delta-elimination activity in catalysis.

The protein belongs to the FPG family. The cofactor is Zn(2+).

It catalyses the reaction 2'-deoxyribonucleotide-(2'-deoxyribose 5'-phosphate)-2'-deoxyribonucleotide-DNA = a 3'-end 2'-deoxyribonucleotide-(2,3-dehydro-2,3-deoxyribose 5'-phosphate)-DNA + a 5'-end 5'-phospho-2'-deoxyribonucleoside-DNA + H(+). Involved in base excision repair of DNA damaged by oxidation or by mutagenic agents. Acts as a DNA glycosylase that recognizes and removes damaged bases. Has a preference for oxidized pyrimidines, such as thymine glycol, 5,6-dihydrouracil and 5,6-dihydrothymine. Has AP (apurinic/apyrimidinic) lyase activity and introduces nicks in the DNA strand. Cleaves the DNA backbone by beta-delta elimination to generate a single-strand break at the site of the removed base with both 3'- and 5'-phosphates. The protein is Endonuclease 8 of Escherichia coli (strain K12 / MC4100 / BW2952).